The primary structure comprises 1466 residues: ABC transporter G family member 40 (1466 aa).

The segment at 1–21 (MSHRHHAALVASASGRSPSWG) is disordered. One can recognise an ABC transporter 1 domain in the interval 176-449 (GLIGQFGSSN…FEASGFRCPQ (274 aa)). Residue 209 to 216 (GPPSSGKS) participates in ATP binding. The region spanning 527–740 (ESLKAVLCRE…SQNAISINEF (214 aa)) is the ABC transmembrane type-2 1 domain. 6 helical membrane-spanning segments follow: residues 545 to 565 (FLYIFKVTQLIILAFLSMTVF), 581 to 601 (FLGALTFNLITVMFNGLSELN), 633 to 653 (VPVSLVEATVWVVITYYVMGF), 664 to 684 (FLAFFVTHLMAMALFRFLGAI), 690 to 710 (IAISFGMLVLLIVFVFGGFVI), and 776 to 796 (FWLSIGALVGFIILFNTLYIL). Residues 821-831 (YTETRNEEHRS) are compositionally biased toward basic and acidic residues. Positions 821–851 (YTETRNEEHRSRTSTTTSSIPTSANGEGNRP) are disordered. Residues 833 to 843 (TSTTTSSIPTS) are compositionally biased toward low complexity. The ABC transporter 2 domain occupies 865 to 1117 (LCFNHLNYYV…KLVEYFETIL (253 aa)). 910–917 (GVSGAGKT) is a binding site for ATP. Residues 1190-1404 (IQCVANLWKQ…TIYGVIASQF (215 aa)) enclose the ABC transmembrane type-2 2 domain. The next 7 membrane-spanning stretches (helical) occupy residues 1209 to 1229 (YNSLRYLTTFLYGLFFGTVFW), 1241 to 1261 (LYNLLGATYAAIFFIGATNCM), 1297 to 1317 (FIYNIIQGILYTVIIYAMIGY), 1327 to 1347 (FLFFIVSSFNYFTFFGMMLVA), 1355 to 1375 (ANILITFALPLWNLFAGFLIF), 1396 to 1416 (IYGVIASQFGGNGGSISVPGG), and 1435 to 1455 (FLGYVILAHFGFMAAFVLIFG).

This sequence belongs to the ABC transporter superfamily. ABCG family. PDR (TC 3.A.1.205) subfamily.

It localises to the membrane. The polypeptide is ABC transporter G family member 40 (Oryza sativa subsp. japonica (Rice)).